Reading from the N-terminus, the 208-residue chain is Troponin I, cardiac muscle (208 aa).

3 disordered regions span residues 1 to 37 (MAEE…KISA), 54 to 74 (DLER…GELC), and 168 to 208 (VRKD…GGQS). N-acetylalanine is present on Ala-2. The tract at residues 28–73 (HAKRQSKISASRKLQLKTLLLQRAKRDLEREEQERAGEKQRHLGEL) is involved in binding TNC. Basic and acidic residues-rich tracts occupy residues 54–71 (DLER…RHLG) and 168–187 (VRKD…RKNV).

The protein belongs to the troponin I family. Binds to actin and tropomyosin.

Troponin I is the inhibitory subunit of troponin, the thin filament regulatory complex which confers calcium-sensitivity to striated muscle actomyosin ATPase activity. This chain is Troponin I, cardiac muscle (TNNI3), found in Coturnix japonica (Japanese quail).